We begin with the raw amino-acid sequence, 326 residues long: Pyruvate dehydrogenase E1 component subunit alpha (326 aa).

As to quaternary structure, heterodimer of an alpha and a beta chain. Thiamine diphosphate serves as cofactor.

The enzyme catalyses N(6)-[(R)-lipoyl]-L-lysyl-[protein] + pyruvate + H(+) = N(6)-[(R)-S(8)-acetyldihydrolipoyl]-L-lysyl-[protein] + CO2. In terms of biological role, the pyruvate dehydrogenase complex catalyzes the overall conversion of pyruvate to acetyl-CoA and CO(2). It contains multiple copies of three enzymatic components: pyruvate dehydrogenase (E1), dihydrolipoamide acetyltransferase (E2) and lipoamide dehydrogenase (E3). In Rickettsia conorii (strain ATCC VR-613 / Malish 7), this protein is Pyruvate dehydrogenase E1 component subunit alpha (pdhA).